The chain runs to 1141 residues: DNA-directed RNA polymerase subunit beta (1141 aa).

It belongs to the RNA polymerase beta chain family. As to quaternary structure, the RNAP catalytic core consists of 2 alpha, 1 beta, 1 beta' and 1 omega subunit. When a sigma factor is associated with the core the holoenzyme is formed, which can initiate transcription.

The catalysed reaction is RNA(n) + a ribonucleoside 5'-triphosphate = RNA(n+1) + diphosphate. Its function is as follows. DNA-dependent RNA polymerase catalyzes the transcription of DNA into RNA using the four ribonucleoside triphosphates as substrates. The sequence is that of DNA-directed RNA polymerase subunit beta from Parafrankia sp. (strain EAN1pec).